The primary structure comprises 444 residues: 4-O-dimethylallyl-L-tyrosine synthase (444 aa).

Belongs to the tryptophan dimethylallyltransferase family. In terms of assembly, homodimer.

The enzyme catalyses L-tyrosine + dimethylallyl diphosphate = 4-O-dimethylallyl-L-tyrosine + diphosphate. In terms of biological role, 4-O-dimethylallyl-L-tyrosine synthase; part of the gene cluster that mediates the biosynthesis of an unusual class of epipolythiodioxopiperazines (ETPs) lacking the reactive thiol group important for toxicity. Firstly, L-tyrosine is prenylated by tcpD, before undergoing condensation with L-glycine in a reaction catalyzed by the NRPS tcpP leading to the diketopiperazine (DKP) backbone. Afterwards the alpha-carbon of tyrosine is oxidized by the cytochrome P450 tcpC to form a hydroxyl group. However, in contrast other ETP biosynthesis pathways studied so far, tcpC is not able to bishydroxylate the DKP at both alpha-carbon positions, but hydroxylates the alpha-carbon of the tyrosine part and the nitrogen of the glycine part. The next steps involve an alpha,beta-elimination reaction catalyzed by tcpI, a methylation by the methyltransferase tcpN the action of the four enzyme cascade tcpG/K/J/I. Due to a dysfunctional cytochrome P450 monooxygenase tcpC, the pathway leads to the biosynthesis of probable non-toxic metabolites lacking the reactive thiol group. This Claviceps purpurea (strain 20.1) (Ergot fungus) protein is 4-O-dimethylallyl-L-tyrosine synthase.